The following is a 729-amino-acid chain: FYN-binding protein 2 (729 aa).

Disordered stretches follow at residues 18–130 (KFNA…EEKG), 170–320 (EGQK…SAEL), 371–408 (ELSPRPKEEENTMEEKESWESEPLEPRKELHPSRPPKV), and 469–490 (VTKETPSPSTIRSSSSSEKTYD). 4 stretches are compositionally biased toward polar residues: residues 69 to 81 (GVSQPLKNQTLKS), 89 to 99 (KTSSSSGTPEK), 190 to 216 (GAQTLPPQSHSMAQRKSPVTSKASSVS), and 226 to 240 (KSPATEGSHRSSQCQ). Residues 275–284 (GPPPPKPSKP) are compositionally biased toward pro residues. The span at 374–402 (PRPKEEENTMEEKESWESEPLEPRKELHP) shows a compositional bias: basic and acidic residues. The segment covering 473–485 (TPSPSTIRSSSSS) has biased composition (low complexity). The residue at position 489 (tyrosine 489) is a Phosphotyrosine. The SH2-binding; to LCP2 signature appears at 520–523 (YEDI). The disordered stretch occupies residues 576-603 (DLGPRSQDDSQDGIIYDDVDTREKESND). Residues 584–593 (DSQDGIIYDD) are compositionally biased toward acidic residues. Tyrosine 591 is subject to Phosphotyrosine. The segment covering 594 to 603 (VDTREKESND) has biased composition (basic and acidic residues). An SH3 domain is found at 668 to 728 (LVINRAVACA…LVEHLDFKHQ (61 aa)).

Interacts with SKAP1, LCK and FYN. The phosphorylated form interacts with LCP2. In terms of processing, phosphorylation is required for its function in T-cell activation.

It localises to the membrane raft. Adapter protein that plays a role in T-cell receptor (TCR)-mediated activation of signaling pathways. Required for T-cell activation and integrin-mediated T-cell adhesion in response to TCR stimulation. The polypeptide is FYN-binding protein 2 (Mus musculus (Mouse)).